The sequence spans 143 residues: Flagellar assembly factor FliW (143 aa).

It belongs to the FliW family. Interacts with flagellin in a 1:1 complex. Two molecules interact with each CsrA dimer; cannot interact with both flagellin and CsrA simultaneously. Has a higher affinity for CsrA than for flagellin. Interacts directly with flagellin (hag), forms a 3-way complex of Hag, FliS and FliW in which Flis and FliW do not directly interact. Interaction with Hag may occur via the C-terminus of Hag.

The protein resides in the cytoplasm. Its function is as follows. Acts as an anti-CsrA protein, binds CsrA and prevents it from repressing translation of its target genes, one of which is flagellin. Binds to flagellin (hag), which is implicated in polymerization, and participates in the assembly of the flagellum. An antagonist to translational regulator CsrA, it binds CsrA at an allosteric site and non-competitively inhibits CsrA binding to hag RNA. Partner switching by flagellin between FliW and CsrA provides a flagellar assembly checkpoint to tightly control the timing of flagellin synthesis. Flagellin binds to assembly factor FliW, freeing translation regulator CsrA to repress translation of the flagellin mRNA. When the flagellar hook is assembled flagellin is secreted, depleting intracellular flagellin, which frees FliW to interact with CsrA and inhibits CsrA binding to mRNA. This derepresses flagellin translation and provides protein for flagellar assembly. Once the flagellar filament is completed cytoplasmic flagellin levels rise and CsrA translation repression of flagellin reinitiates. Binds to CsrA and displaces it from hag mRNA. Binds to hag mRNA itself, but only at much higher concentrations than those required to displace CsrA. In Bacillus subtilis (strain 168), this protein is Flagellar assembly factor FliW.